We begin with the raw amino-acid sequence, 275 residues long: Melanoma-associated antigen B5 (275 aa).

A disordered region spans residues 1-33 (MTSAGVFNAGSDERANSRDEEYPCSSEVSPSTE). A compositionally biased stretch (basic and acidic residues) spans 11 to 21 (SDERANSRDEE). Positions 23–33 (PCSSEVSPSTE) are enriched in low complexity. An MAGE domain is found at 40–239 (INIKVGLLEQ…GAFSSQYEEA (200 aa)).

As to expression, expressed in testis. Not expressed in other normal tissues, but is expressed in tumors of different histological origins.

This chain is Melanoma-associated antigen B5 (MAGEB5), found in Homo sapiens (Human).